The sequence spans 547 residues: Myrosinase 2 (547 aa).

An N-terminal signal peptide occupies residues 1–28 (MQHNTYIYILTMKLLGFALAILLVVATC). 3 cysteine pairs are disulfide-bonded: Cys-36/Cys-460, Cys-44/Cys-456, and Cys-236/Cys-244. Residues Gln-69, His-171, and 216–217 (NQ) contribute to the a beta-D-glucoside site. Residue Asn-340 is glycosylated (N-linked (GlcNAc...) asparagine). Tyr-359 lines the a beta-D-glucoside pocket. Asn-384 carries N-linked (GlcNAc...) asparagine glycosylation. A beta-D-glucoside is bound by residues Glu-430, Trp-479, 486–487 (EF), and Phe-495. Residue Glu-430 is the Nucleophile of the active site. N-linked (GlcNAc...) asparagine glycosylation is present at Asn-504.

The protein belongs to the glycosyl hydrolase 1 family. In terms of assembly, interacts with MVP1. In terms of tissue distribution, expressed in phloem-associated cells.

It carries out the reaction a thioglucoside + H2O = a sugar + a thiol.. In terms of biological role, may degrade glucosinolates (glucose residue linked by a thioglucoside bound to an amino acid derivative) to glucose, sulfate and any of the products: thiocyanates, isothiocyanates, nitriles, epithionitriles or oxazolidine-2-thiones. These toxic degradation products can deter insect herbivores. Seems to function in abscisic acid (ABA) and methyl jasmonate (MeJA) signaling in guard cells. Functionally redundant with TGG1. The protein is Myrosinase 2 of Arabidopsis thaliana (Mouse-ear cress).